The sequence spans 446 residues: MEELGSLAVWLGAAWLSLVFALIVLPSALGVSLGISEAYMWVLVKTLEWATIRIEKGVKKPQPQMLKIPAANGIIERDETPMEKEIAGLHRMEFRFSDIFYFCRKGFEAIVEDEVTQRFSSEELVSWNLLTRTNVNFHYVSLRLTVVWVIGVIVRYCFLLPLRFTLAAIGITSMIVGTTVVGQLPNGSLKNYLSEVVHLTCSRILVRALSGTIHYHNKENKPQKGGICVANHTSPIDAIILTNDGCYAMVGQVHGGLMGVIQRATVKACPHVWFERSEIKDRHLVTKRLREHVADKNKLPILIFPEGTCINNTSVMMFKKGSFEIGGTIYPVAIKYDPQFGDAFWNSSKYNIVSYLLRIMTSWAIVCHVWYMPPMVRKEGEDAVQFANRVRSAIARQGGLTELPWDGGLKRAKVKDSFKEEQQKNYSKMLVRNGSQGNLPAGTESD.

The next 3 helical transmembrane spans lie at 25 to 45 (LPSA…VLVK), 142 to 162 (LRLT…LLPL), and 164 to 184 (FTLA…VGQL). Residues 232–237 (HTSPID) carry the HXXXXD motif motif. A helical membrane pass occupies residues 352 to 372 (IVSYLLRIMTSWAIVCHVWYM). Positions 418 to 446 (FKEEQQKNYSKMLVRNGSQGNLPAGTESD) are disordered.

The protein belongs to the 1-acyl-sn-glycerol-3-phosphate acyltransferase family.

It is found in the endoplasmic reticulum membrane. The catalysed reaction is sn-glycerol 3-phosphate + an acyl-CoA = a 1-acyl-sn-glycero-3-phosphate + CoA. It carries out the reaction a 1-acyl-sn-glycero-3-phosphate + an acyl-CoA = a 1,2-diacyl-sn-glycero-3-phosphate + CoA. It catalyses the reaction dodecanoyl-CoA + sn-glycerol 3-phosphate = 1-dodecanoyl-sn-glycerol 3-phosphate + CoA. The enzyme catalyses sn-glycerol 3-phosphate + hexadecanoyl-CoA = 1-hexadecanoyl-sn-glycero-3-phosphate + CoA. The catalysed reaction is sn-glycerol 3-phosphate + (9Z)-octadecenoyl-CoA = 1-(9Z-octadecenoyl)-sn-glycero-3-phosphate + CoA. It carries out the reaction (9Z,12Z)-octadecadienoyl-CoA + sn-glycerol 3-phosphate = 1-(9Z,12Z)-octadecadienoyl-sn-glycero-3-phosphate + CoA. It catalyses the reaction 1-tetradecanoyl-sn-glycerol 3-phosphate + (9Z)-octadecenoyl-CoA = 1-tetradecanoyl-2-(9Z)-octadecenoyl-sn-glycero-3-phosphate + CoA. The enzyme catalyses 1-hexadecanoyl-sn-glycero-3-phosphate + (9Z)-octadecenoyl-CoA = 1-hexadecanoyl-2-(9Z-octadecenoyl)-sn-glycero-3-phosphate + CoA. The catalysed reaction is 1-(9Z-octadecenoyl)-sn-glycero-3-phosphate + (9Z)-octadecenoyl-CoA = 1,2-di-(9Z-octadecenoyl)-sn-glycero-3-phosphate + CoA. It carries out the reaction 1-(6Z,9Z,12Z-octadecatrienoyl)-sn-glycero-3-phosphate + (9Z)-octadecenoyl-CoA = (6Z,9Z,12Z)-octadecatrienoyl-2-(9Z)-octadecenoyl-sn-glycero-3-phosphate + CoA. It catalyses the reaction 1-(9Z,12Z,15Z)-octadecatrienoyl-sn-glycero-3-phosphate + (9Z)-octadecenoyl-CoA = 1-(9Z,12Z,15Z)-octadecatrienoyl-2-(9Z)-octadecenoyl-sn-glycero-3-phosphate + CoA. The enzyme catalyses 1-(9Z-octadecenoyl)-sn-glycero-3-phosphate + tetradecanoyl-CoA = 1-(9Z)-octadecenoyl-2-tetradecanoyl-sn-glycero-3-phosphate + CoA. The catalysed reaction is 1-(9Z-octadecenoyl)-sn-glycero-3-phosphate + hexadecanoyl-CoA = 1-(9Z)-octadecenoyl-2-hexadecanoyl-sn-glycero-3-phosphate + CoA. It carries out the reaction 1-(9Z-octadecenoyl)-sn-glycero-3-phosphate + octadecanoyl-CoA = 1-(9Z-octadecenoyl)-2-octadecanoyl-sn-glycero-3-phosphate + CoA. It catalyses the reaction 1-(9Z-octadecenoyl)-sn-glycero-3-phosphate + (9Z,12Z)-octadecadienoyl-CoA = 1-(9Z)-octadecenoyl-2-(9Z,12Z)-octadecadienoyl-sn-glycero-3-phosphate + CoA. The enzyme catalyses 1-(5Z,8Z,11Z,14Z-eicosatetraenoyl)-sn-glycero-3-phosphate + (9Z)-octadecenoyl-CoA = 1-(5Z,8Z,11Z,14Z)-eicosatetraenoyl-2-(9Z)-octadecenoyl-sn-glycero-3-phosphate + CoA. Its pathway is glycerolipid metabolism; triacylglycerol biosynthesis. The protein operates within phospholipid metabolism; CDP-diacylglycerol biosynthesis; CDP-diacylglycerol from sn-glycerol 3-phosphate: step 1/3. Functionally, converts glycerol-3-phosphate to 1-acyl-sn-glycerol-3-phosphate (lysophosphatidic acid or LPA) by incorporating an acyl moiety at the sn-1 position of the glycerol backbone. Also converts LPA into 1,2-diacyl-sn-glycerol-3-phosphate (phosphatidic acid or PA) by incorporating an acyl moiety at the sn-2 position of the glycerol backbone. Protects cells against lipotoxicity. This chain is Glycerol-3-phosphate acyltransferase 3, found in Gallus gallus (Chicken).